Reading from the N-terminus, the 218-residue chain is Glutathione S-transferase Mu 5 (218 aa).

The region spanning 2–88 (PMTLGYWDIR…YIARKHNLCG (87 aa)) is the GST N-terminal domain. Residues 7–8 (YW), 46–50 (WLNEK), 59–60 (NL), and 72–73 (QS) contribute to the glutathione site. In terms of domain architecture, GST C-terminal spans 90-207 (TEEEKIRVDI…MKSSQFLRGL (118 aa)). Tyr116 serves as a coordination point for substrate.

The protein belongs to the GST superfamily. Mu family. In terms of assembly, homodimer.

The protein resides in the cytoplasm. It carries out the reaction RX + glutathione = an S-substituted glutathione + a halide anion + H(+). Conjugation of reduced glutathione to a wide number of exogenous and endogenous hydrophobic electrophiles. The chain is Glutathione S-transferase Mu 5 (GSTM5) from Homo sapiens (Human).